Consider the following 405-residue polypeptide: Multi-drug resistance efflux pump PmrA homolog (405 aa).

A run of 12 helical transmembrane segments spans residues 13–33 (LFITWIGCFFVGSSFSLVMPF), 50–70 (LYSGLAFSLPALASGLVAPIW), 88–108 (IVMTLTMGGIAFAPNVWWLLG), 111–131 (LLMGFFSGYIPNSTAMIASQA), 147–167 (MVSGTLIGPSLGGLLAEWFGM), 170–190 (VFLIVGALLALATLLTIFFVH), 216–236 (ILFGLLVTTFIIQITSQSIEP), 254–274 (FISGLIVSAVGLSAMLSSSFL), 286–306 (LILIGLVFTFIIYLPMAFVQS), 308–328 (LQLGILRFLLGFGTGALTPSV), 350–370 (MCSNLGMVTGPLVGSAIAGYI), and 374–394 (AAIVGTSLFVIVNIIWSFINF).

Belongs to the major facilitator superfamily. TCR/Tet family.

Its subcellular location is the cell membrane. Its function is as follows. Efflux pump for various substrates. In Lactococcus lactis subsp. lactis (strain IL1403) (Streptococcus lactis), this protein is Multi-drug resistance efflux pump PmrA homolog (pmrA).